Here is a 491-residue protein sequence, read N- to C-terminus: Ketol-acid reductoisomerase (NADP(+)) (491 aa).

The KARI N-terminal Rossmann domain occupies 15 to 208 (AQLGKCRFMG…GGHRAGVLES (194 aa)). Residues 45–48 (CGAQ), R68, R76, S78, and 108–110 (DKQ) contribute to the NADP(+) site. The active site involves H132. G158 serves as a coordination point for NADP(+). 2 KARI C-terminal knotted domains span residues 209 to 344 (SFVA…TAPQ) and 345 to 484 (YEGK…MTDM). 4 residues coordinate Mg(2+): D217, E221, E389, and E393. S414 contributes to the substrate binding site.

It belongs to the ketol-acid reductoisomerase family. It depends on Mg(2+) as a cofactor.

It carries out the reaction (2R)-2,3-dihydroxy-3-methylbutanoate + NADP(+) = (2S)-2-acetolactate + NADPH + H(+). It catalyses the reaction (2R,3R)-2,3-dihydroxy-3-methylpentanoate + NADP(+) = (S)-2-ethyl-2-hydroxy-3-oxobutanoate + NADPH + H(+). Its pathway is amino-acid biosynthesis; L-isoleucine biosynthesis; L-isoleucine from 2-oxobutanoate: step 2/4. It participates in amino-acid biosynthesis; L-valine biosynthesis; L-valine from pyruvate: step 2/4. In terms of biological role, involved in the biosynthesis of branched-chain amino acids (BCAA). Catalyzes an alkyl-migration followed by a ketol-acid reduction of (S)-2-acetolactate (S2AL) to yield (R)-2,3-dihydroxy-isovalerate. In the isomerase reaction, S2AL is rearranged via a Mg-dependent methyl migration to produce 3-hydroxy-3-methyl-2-ketobutyrate (HMKB). In the reductase reaction, this 2-ketoacid undergoes a metal-dependent reduction by NADPH to yield (R)-2,3-dihydroxy-isovalerate. The sequence is that of Ketol-acid reductoisomerase (NADP(+)) from Escherichia fergusonii (strain ATCC 35469 / DSM 13698 / CCUG 18766 / IAM 14443 / JCM 21226 / LMG 7866 / NBRC 102419 / NCTC 12128 / CDC 0568-73).